A 458-amino-acid chain; its full sequence is UDP-N-acetylmuramate--L-alanine ligase (458 aa).

ATP is bound at residue 118–124 (GTHGKTT).

This sequence belongs to the MurCDEF family.

It localises to the cytoplasm. It carries out the reaction UDP-N-acetyl-alpha-D-muramate + L-alanine + ATP = UDP-N-acetyl-alpha-D-muramoyl-L-alanine + ADP + phosphate + H(+). Its pathway is cell wall biogenesis; peptidoglycan biosynthesis. Its function is as follows. Cell wall formation. This chain is UDP-N-acetylmuramate--L-alanine ligase, found in Clostridium novyi (strain NT).